The primary structure comprises 359 residues: Proton-gated ion channel (359 aa).

The first 43 residues, 1 to 43, serve as a signal peptide directing secretion; sequence MFPTGWRPKLSESIAASRMLWQPMAAVAVVQIGLLWFSPPVWG. The Periplasmic portion of the chain corresponds to 44–235; sequence QDMVSPPPPI…LDYQLRISRQ (192 aa). A helical membrane pass occupies residues 236–258; the sequence is YFSYIPNIILPMLFILFISWTAF. The Cytoplasmic portion of the chain corresponds to 259–261; that stretch reads WST. Residues 262 to 286 traverse the membrane as a helical segment; that stretch reads SYEANVTLVVSTLIAHIAFNILVET. The Periplasmic segment spans residues 287–294; the sequence is NLPKTPYM. Residues 295 to 323 form a helical membrane-spanning segment; it reads TYTGAIIFMIYLFYFVAVIEVTVQHYLKV. Residues 324-326 are Cytoplasmic-facing; sequence ESQ. The helical transmembrane segment at 327-359 threads the bilayer; sequence PARAASITRASRIAFPVVFLLANIILAFLFFGF.

The protein belongs to the ligand-gated ion channel (TC 1.A.9) family. Homopentamer.

The protein resides in the cell inner membrane. With respect to regulation, tetraethylammonium (TEA) and tetrabutylammonium (TBA) inhibit the proton-activated currents in a dose- and voltage-dependent manner in vitro, whereas the blocker of acid sensing ion channels, amiloride, has no effect. Channel current of GLIC can be inhibited by inhaled and intravenous general anesthetics at and below concentrations used clinically. Ion conduction is also inhibited by lidocaine and by divalent transition metal ions such as cadmium ions. Its function is as follows. Cationic channel with similar permeabilities for Na(+) and K(+), that is activated by an increase of the proton concentration on the extracellular side. Displays no permeability for chloride ions. Shows slow kinetics of activation, no desensitization and a single channel conductance of 8 pS. Might contribute to adaptation to external pH change. This chain is Proton-gated ion channel (glvI), found in Gloeobacter violaceus (strain ATCC 29082 / PCC 7421).